The following is a 202-amino-acid chain: Protein G1-like4 (202 aa).

Disordered regions lie at residues 1-44 and 158-202; these read MDLS…RYEA and RARG…GAAC. The span at 12–22 shows a compositional bias: gly residues; the sequence is SGGGNGGGGGS. Positions 23–36 are enriched in low complexity; sequence SSSNSSPSMGAGAP. One can recognise an ALOG domain in the interval 41 to 168; the sequence is RYEAQKRRDW…ARGVSYEKKK (128 aa). A Nuclear localization signal motif is present at residues 166-170; that stretch reads KKKRK. Residues 173-186 show a composition bias toward low complexity; sequence QQQQLQGGDSSGLH. Positions 192-202 are enriched in pro residues; the sequence is PPPPPPAGAAC.

Belongs to the plant homeotic and developmental regulators ALOG protein family.

It is found in the nucleus. Functionally, probable transcription regulator that acts as a developmental regulator by promoting cell growth in response to light. This chain is Protein G1-like4, found in Oryza sativa subsp. indica (Rice).